Reading from the N-terminus, the 101-residue chain is Olivetolic acid cyclase (101 aa).

The Stress-response A/B barrel domain occupies 3-97; it reads VKHLIVLKFK…FWEKLLIFDY (95 aa). 3,5,7-trioxododecanoyl-CoA is bound at residue histidine 5. Valine 31, isoleucine 34, and methionine 37 together coordinate Mg(2+). Residue tyrosine 72 participates in 3,5,7-trioxododecanoyl-CoA binding. Residues tyrosine 72 and histidine 75 each act as acid/base catalyst in the active site.

Homodimer. Expressed in glandular trichomes and at lower levels in female flowers.

It is found in the cytoplasm. It catalyses the reaction 3,5,7-trioxododecanoyl-CoA = olivetolate + CoA + H(+). It participates in secondary metabolite biosynthesis; terpenoid biosynthesis. Functionally, involved in the biosynthesis of cannabinoids-related terpenophenolic natural products, which have pharmacological activity. Polyketide cyclase which functions in concert with OLS/TKS to form olivetolic acid. Has no intrinsic polyketide synthase activity and requires the presence of OLS to produce olivetolic acid. This Cannabis sativa (Hemp) protein is Olivetolic acid cyclase.